The chain runs to 445 residues: tRNA modification GTPase MnmE (445 aa).

Residues Arg20, Glu79, and Lys119 each coordinate (6S)-5-formyl-5,6,7,8-tetrahydrofolate. One can recognise a TrmE-type G domain in the interval 215–371; sequence GLKLAIIGPP…ILKNIENIAE (157 aa). Residue Asn225 participates in K(+) binding. GTP contacts are provided by residues 225–230, 244–250, and 269–272; these read NTGKSS, SNIAGTT, and DTAG. Mg(2+) is bound at residue Ser229. Residues Ser244, Ile246, and Thr249 each contribute to the K(+) site. Mg(2+) is bound at residue Thr250. Lys445 provides a ligand contact to (6S)-5-formyl-5,6,7,8-tetrahydrofolate.

It belongs to the TRAFAC class TrmE-Era-EngA-EngB-Septin-like GTPase superfamily. TrmE GTPase family. In terms of assembly, homodimer. Heterotetramer of two MnmE and two MnmG subunits. Requires K(+) as cofactor.

It localises to the cytoplasm. Its function is as follows. Exhibits a very high intrinsic GTPase hydrolysis rate. Involved in the addition of a carboxymethylaminomethyl (cmnm) group at the wobble position (U34) of certain tRNAs, forming tRNA-cmnm(5)s(2)U34. In Rickettsia prowazekii (strain Madrid E), this protein is tRNA modification GTPase MnmE.